Here is an 87-residue protein sequence, read N- to C-terminus: Small ribosomal subunit protein uS15 (87 aa).

This sequence belongs to the universal ribosomal protein uS15 family. In terms of assembly, part of the 30S ribosomal subunit. Forms a bridge to the 50S subunit in the 70S ribosome, contacting the 23S rRNA.

Its function is as follows. One of the primary rRNA binding proteins, it binds directly to 16S rRNA where it helps nucleate assembly of the platform of the 30S subunit by binding and bridging several RNA helices of the 16S rRNA. Functionally, forms an intersubunit bridge (bridge B4) with the 23S rRNA of the 50S subunit in the ribosome. The chain is Small ribosomal subunit protein uS15 from Alkaliphilus metalliredigens (strain QYMF).